Here is a 1054-residue protein sequence, read N- to C-terminus: Leucine-rich repeats and immunoglobulin-like domains protein 2 (1054 aa).

Residues 1-39 (MAAAPRGIWEQRRLGCGLGPLARLLILAQALRLLPAARA) form the signal peptide. Residues 40 to 74 (GLCPAPCACRLPLLDCSRRKLPAPSWRALSGPLPS) form the LRRNT domain. 15 LRR repeats span residues 75–96 (DISS…LESQ), 97–118 (TLQE…GEPT), 120–141 (NITL…AFEL), 144–165 (ALES…SFPR), 167–188 (SLKY…CFDN), 192–213 (SLLV…VFKL), 215–236 (HLQF…TFQG), 239–260 (SLRS…AFFG), 263–284 (NMEE…WLYG), 287–308 (MLQQ…AWEF), 311–332 (RLSE…AFVG), 335–356 (LLER…VFRF), 359–381 (NLQT…SEAF), 386–407 (SLTK…AFIG), and 410–431 (SLEY…AFSQ). Asn-90 is a glycosylation site (N-linked (GlcNAc...) asparagine). N-linked (GlcNAc...) asparagine glycosylation occurs at Asn-120. 2 N-linked (GlcNAc...) asparagine glycosylation sites follow: Asn-172 and Asn-188. The N-linked (GlcNAc...) asparagine glycan is linked to Asn-273. N-linked (GlcNAc...) asparagine glycosylation is found at Asn-440, Asn-467, Asn-513, Asn-570, and Asn-588. Positions 442-493 (SSLLCDCHLKWLLQWLVDNNFHHSVNVSCAHPEWLAGQSILNVDLKDFVCDD) constitute an LRRCT domain. Ig-like C2-type domains lie at 497 to 596 (PQIR…AKLT), 601 to 690 (PSFL…ASLT), and 695 to 784 (PSFI…NVIS). Cys-518 and Cys-579 are disulfide-bonded. A disulfide bond links Cys-622 and Cys-674. Asn-686 and Asn-727 each carry an N-linked (GlcNAc...) asparagine glycan. An intrachain disulfide couples Cys-716 to Cys-765. Residues 807 to 827 (IVIIVVVCCVVGTSLIWVIVI) form a helical membrane-spanning segment. Tyr-905 carries the phosphotyrosine modification. N-linked (GlcNAc...) asparagine glycosylation is present at Asn-1024.

It is found in the cell membrane. It localises to the cytoplasm. This Mus musculus (Mouse) protein is Leucine-rich repeats and immunoglobulin-like domains protein 2 (Lrig2).